We begin with the raw amino-acid sequence, 205 residues long: Golgi apparatus membrane protein TVP23 homolog B (205 aa).

Met1 carries the N-acetylmethionine modification. The tract at residues 1–21 is disordered; it reads MLQQDSNDDTEDVSLFDAEEE. Transmembrane regions (helical) follow at residues 34–53, 54–72, 126–146, and 152–172; these read PVAS…VYLL, CGLL…ILLL, IFWL…FSAL, and KWLA…YGYI.

This sequence belongs to the TVP23 family.

It localises to the membrane. This Homo sapiens (Human) protein is Golgi apparatus membrane protein TVP23 homolog B (TVP23B).